Here is a 585-residue protein sequence, read N- to C-terminus: Frizzled-5 (585 aa).

The first 26 residues, 1-26, serve as a signal peptide directing secretion; sequence MARPDPSAPPSLLLLLLAQLVGRAAA. Residues 27–238 are Extracellular-facing; that stretch reads ASKAPVCQEI…ADERTFATFW (212 aa). One can recognise an FZ domain in the interval 28–150; that stretch reads SKAPVCQEIT…RDAEVLCMDY (123 aa). Disulfide bonds link C33-C94, C41-C87, C78-C116, C105-C147, and C109-C133. A glycan (N-linked (GlcNAc...) asparagine) is linked at N47. N-linked (GlcNAc...) asparagine glycosylation is present at N151. Residues 156–179 form a disordered region; that stretch reads TTAPPRPFPAKPTLPGPPGAPASG. Residues 159–175 are compositionally biased toward pro residues; the sequence is PPRPFPAKPTLPGPPGA. A helical transmembrane segment spans residues 239-259; that stretch reads IGLWSVLCFISTSTTVATFLI. The Cytoplasmic segment spans residues 260–270; it reads DMERFRYPERP. The chain crosses the membrane as a helical span at residues 271 to 291; the sequence is IIFLSACYLCVSLGFLVRLVV. Topologically, residues 292–315 are extracellular; it reads GHASVACSREHNHIHYETTGPALC. A helical transmembrane segment spans residues 316–336; that stretch reads TIVFLLVYFFGMASSIWWVIL. Residues 337–358 lie on the Cytoplasmic side of the membrane; sequence SLTWFLAAGMKWGNEAIAGYAQ. A helical membrane pass occupies residues 359–379; it reads YFHLAAWLIPSVKSITALALS. Topologically, residues 380-402 are extracellular; the sequence is SVDGDPVAGICYVGNQNLNSLRG. Residues 403–423 traverse the membrane as a helical segment; sequence FVLGPLVLYLLVGTLFLLAGF. Topologically, residues 424–449 are cytoplasmic; sequence VSLFRIRSVIKQGGTKTDKLEKLMIR. Residues 450 to 470 traverse the membrane as a helical segment; sequence IGIFTLLYTVPASIVVACYLY. At 471–500 the chain is on the extracellular side; sequence EQHYRESWEAALTCACPGHDTGQPRAKPEY. The chain crosses the membrane as a helical span at residues 501–521; it reads WVLMLKYFMCLVVGITSGVWI. The Cytoplasmic segment spans residues 522–585; that stretch reads WSGKTVESWR…YHKQVSLSHV (64 aa). Positions 525–530 match the Lys-Thr-X-X-X-Trp motif, mediates interaction with the PDZ domain of Dvl family members motif; the sequence is KTVESW. A PDZ-binding motif is present at residues 583–585; sequence SHV.

It belongs to the G-protein coupled receptor Fz/Smo family. Binding of unsaturated fatty acid molecules (via FZ domain) promotes homodimerization. Interacts with WNT2B. Interacts with WNT3A. Interacts with WNT7A. Interacts with GOPC. Ubiquitinated by RNF43 and ZNRF3, leading to its degradation by the proteasome.

It is found in the cell membrane. It localises to the golgi apparatus membrane. Its subcellular location is the synapse. The protein resides in the perikaryon. The protein localises to the cell projection. It is found in the dendrite. It localises to the axon. Functionally, receptor for Wnt proteins. Functions in the canonical Wnt/beta-catenin signaling pathway. In vitro activates WNT2, WNT10B, WNT5A, but not WNT2B or WNT4 signaling. In neurons, activation by WNT7A promotes formation of synapses. May be involved in transduction and intercellular transmission of polarity information during tissue morphogenesis and/or in differentiated tissues. Plays a role in yolk sac angiogenesis and in placental vascularization. Plays a role in ocular development. The polypeptide is Frizzled-5 (FZD5) (Homo sapiens (Human)).